Consider the following 484-residue polypeptide: Polyamine oxidase 3 (484 aa).

Residues E47, R55, V236, and E423 each contribute to the FAD site. Positions 482–484 (SRL) match the Microbody targeting signal motif.

This sequence belongs to the flavin monoamine oxidase family. FAD serves as cofactor. Widely expressed.

The protein localises to the peroxisome. The enzyme catalyses spermine + O2 + H2O = 3-aminopropanal + spermidine + H2O2. The catalysed reaction is N(1)-acetylspermine + O2 + H2O = 3-acetamidopropanal + spermidine + H2O2. It carries out the reaction norspermine + O2 + H2O = norspermidine + 3-aminopropanal + H2O2. It catalyses the reaction spermidine + O2 + H2O = 3-aminopropanal + putrescine + H2O2. The enzyme catalyses thermospermine + O2 + H2O = 3-aminopropanal + spermidine + H2O2. It functions in the pathway amine and polyamine degradation; spermine degradation. Its pathway is amine and polyamine degradation; spermidine degradation. Its function is as follows. Flavoenzyme involved in polyamine back-conversion. Catalyzes the oxidation of the secondary amino group of polyamines, such as spermine, spermidine and their acetyl derivatives. Substrate preference is spermidine &gt; norspermine &gt; thermospermine &gt; N(1)-acetylspermine &gt; spermine. No activity detected when putrescine is used as substrate. Plays an important role in the regulation of polyamine intracellular concentration. This Oryza sativa subsp. japonica (Rice) protein is Polyamine oxidase 3.